The chain runs to 119 residues: Hemerythrin subunit B (119 aa).

Residues H26, H55, E59, H74, H78, H107, and D112 each contribute to the Fe cation site.

It belongs to the hemerythrin family.

Functionally, hemerythrin is a respiratory protein in blood cells of certain marine worms. The oxygen-binding site in each chain contains two iron atoms. This Sipunculus nudus (Sipunculan worm) protein is Hemerythrin subunit B.